The sequence spans 269 residues: Phosphatidylglycerol--prolipoprotein diacylglyceryl transferase (269 aa).

7 helical membrane-spanning segments follow: residues 17-37, 56-76, 92-112, 120-140, 174-194, 202-222, and 237-257; these read LKIH…WLLA, LVFW…VLFY, WKGG…ALWF, FFEL…AGRI, PSQL…LWLY, MAVS…VEFV, and LTMG…LIWL. R139 lines the a 1,2-diacyl-sn-glycero-3-phospho-(1'-sn-glycerol) pocket.

This sequence belongs to the Lgt family.

The protein localises to the cell inner membrane. The catalysed reaction is L-cysteinyl-[prolipoprotein] + a 1,2-diacyl-sn-glycero-3-phospho-(1'-sn-glycerol) = an S-1,2-diacyl-sn-glyceryl-L-cysteinyl-[prolipoprotein] + sn-glycerol 1-phosphate + H(+). It participates in protein modification; lipoprotein biosynthesis (diacylglyceryl transfer). In terms of biological role, catalyzes the transfer of the diacylglyceryl group from phosphatidylglycerol to the sulfhydryl group of the N-terminal cysteine of a prolipoprotein, the first step in the formation of mature lipoproteins. The sequence is that of Phosphatidylglycerol--prolipoprotein diacylglyceryl transferase from Pseudomonas entomophila (strain L48).